The primary structure comprises 535 residues: D-2-hydroxyglutarate dehydrogenase, mitochondrial (535 aa).

A mitochondrion-targeting transit peptide spans 1-50; that stretch reads MVLHLVPRWSASLFRASPRWKKTYSQRASAQLKWLGCPRSVYSPLACRAY. The 180-residue stretch at 110–289 folds into the FAD-binding PCMH-type domain; it reads VRGCSKVLLR…TAVSIVCPPR (180 aa). Lysine 115 carries the post-translational modification N6-succinyllysine. 3 residues coordinate (R)-2-hydroxyglutarate: arginine 400, threonine 404, and lysine 415. A (R)-lactate-binding site is contributed by arginine 400. Arginine 400, threonine 404, and lysine 415 together coordinate (R)-malate. Histidine 448 and histidine 455 together coordinate Zn(2+). Residue asparagine 457 coordinates (R)-2-hydroxyglutarate. Zn(2+) is bound at residue glutamate 489. Residue histidine 490 coordinates (R)-2-hydroxyglutarate. Histidine 490 contacts (R)-lactate. Histidine 490 serves as a coordination point for (R)-malate.

This sequence belongs to the FAD-binding oxidoreductase/transferase type 4 family. FAD serves as cofactor.

It is found in the mitochondrion. The enzyme catalyses (R)-2-hydroxyglutarate + A = 2-oxoglutarate + AH2. It catalyses the reaction (R)-malate + A = oxaloacetate + AH2. With respect to regulation, activated by zinc, cobalt and manganese ions. Inhibited by EDTA. In terms of biological role, catalyzes the oxidation of D-2-hydroxyglutarate (D-2-HG) to alpha-ketoglutarate. Also catalyzes the oxidation of other D-2-hydroxyacids, such as D-malate (D-MAL) and D-lactate (D-LAC). Exhibits high activities towards D-2-HG and D-MAL but a very weak activity towards D-LAC. This Rattus norvegicus (Rat) protein is D-2-hydroxyglutarate dehydrogenase, mitochondrial.